Reading from the N-terminus, the 105-residue chain is Large ribosomal subunit protein bL21c (105 aa).

Belongs to the bacterial ribosomal protein bL21 family. Part of the 50S ribosomal subunit.

Its subcellular location is the plastid. It is found in the chloroplast. Its function is as follows. This protein binds to 23S rRNA. This Thalassiosira pseudonana (Marine diatom) protein is Large ribosomal subunit protein bL21c.